The sequence spans 169 residues: MKFIILTCLLAVALAKQESKDNSQEDFKQTVDVVIFPGQETVKNIPIPQMESVEAPIKNKCYQSIQTFKPPQALKGLYQYHMAKNPWGYTVNRAFPSTRTLQYNQKTMDLSMRAREKIVMSEIKKNIQDYVTKMKQYSKITWPRFVKSLQQYQKTMNPWSCYPYTLLQV.

An N-terminal signal peptide occupies residues 1 to 15 (MKFIILTCLLAVALA).

This sequence belongs to the alpha-casein family. As to expression, mammary gland specific. Secreted in milk.

It localises to the secreted. Functionally, important role in the capacity of milk to transport calcium phosphate. This is Alpha-S2-casein-like B (Csn1s2b) from Rattus norvegicus (Rat).